Reading from the N-terminus, the 207-residue chain is Small ribosomal subunit protein uS4 (207 aa).

Residues K31 to Q55 are disordered. The segment covering G42 to G53 has biased composition (polar residues). The 64-residue stretch at S97 to L160 folds into the S4 RNA-binding domain.

The protein belongs to the universal ribosomal protein uS4 family. In terms of assembly, part of the 30S ribosomal subunit. Contacts protein S5. The interaction surface between S4 and S5 is involved in control of translational fidelity.

One of the primary rRNA binding proteins, it binds directly to 16S rRNA where it nucleates assembly of the body of the 30S subunit. Functionally, with S5 and S12 plays an important role in translational accuracy. The protein is Small ribosomal subunit protein uS4 of Burkholderia lata (strain ATCC 17760 / DSM 23089 / LMG 22485 / NCIMB 9086 / R18194 / 383).